The sequence spans 206 residues: Large ribosomal subunit protein uL4 (206 aa).

It belongs to the universal ribosomal protein uL4 family. As to quaternary structure, part of the 50S ribosomal subunit.

Its function is as follows. One of the primary rRNA binding proteins, this protein initially binds near the 5'-end of the 23S rRNA. It is important during the early stages of 50S assembly. It makes multiple contacts with different domains of the 23S rRNA in the assembled 50S subunit and ribosome. In terms of biological role, forms part of the polypeptide exit tunnel. This Nitrobacter hamburgensis (strain DSM 10229 / NCIMB 13809 / X14) protein is Large ribosomal subunit protein uL4.